Reading from the N-terminus, the 1420-residue chain is ABC transporter G family member 32 (1420 aa).

Positions 135–408 (LRNIHVIGGK…FSSLGFTCPD (274 aa)) constitute an ABC transporter 1 domain. ATP is bound at residue 168-175 (GPPSSGKT). In terms of domain architecture, ABC transmembrane type-2 1 spans 486–699 (ELLKINFAWQ…AQNAASVNEF (214 aa)). The next 7 helical transmembrane spans lie at 504–524 (FIYVFKFVQLLLVALITMTVF), 544–564 (LYFSMVIILFNGFTEVPMLVA), 585–605 (LPSWLLSIPTSIIESATWVAV), 623–643 (FLLYFSLHQMSLGLFRVMGSL), 648–668 (IVANTFGSFAMLVVMTLGGFI), 674–694 (IPSWWIWGYWISPLMYAQNAA), and 735–755 (IGVAALLGYTVLFNILFTLFL). Residues 818-1070 (LSFSNINYYV…ELIKYFESIE (253 aa)) enclose the ABC transporter 2 domain. Residue 863-870 (GVSGAGKT) participates in ATP binding. The region spanning 1143–1357 (SQFVACLWKQ…TLYGLLVSQY (215 aa)) is the ABC transmembrane type-2 2 domain. The next 7 membrane-spanning stretches (helical) occupy residues 1162–1182 (YTAVRFFYTVVISLMLGTICW), 1202–1222 (YAAVLFIGITNATAAQPVVSI), 1235–1255 (MYSALPFAFAQVFIEFPYVLA), 1277–1297 (FLWYLFFMYFSIMYFTFYGMM), 1307–1327 (VASIIAAPFYMLWNLFSGFMI), 1334–1354 (LWWRWYYWANPVAWTLYGLLV), and 1392–1412 (VSAIMVVAFCVFFSLVFAFAI).

The protein belongs to the ABC transporter superfamily. ABCG family. PDR (TC 3.A.1.205) subfamily. Ubiquitous in aerial organs. Higher expression levels in young, expanding tissues than in older tissues. Detected in the epidermal layer.

It localises to the cell membrane. May be a general defense protein. Required for the formation of the cuticle layer of the cell wall. This Arabidopsis thaliana (Mouse-ear cress) protein is ABC transporter G family member 32.